A 529-amino-acid chain; its full sequence is Glutamyl-tRNA(Gln) amidotransferase subunit B-2, chloroplastic/mitochondrial (529 aa).

Positions 17–61 are disordered; the sequence is STRVSLPRGSIPPPPTSSSSSSSSSREGRRPRFFSTTTTSAERPV.

It belongs to the GatB/GatE family. GatB subfamily. As to quaternary structure, subunit of the heterotrimeric GatCAB amidotransferase (AdT) complex, composed of A, B and C subunits.

The protein localises to the mitochondrion. It localises to the plastid. The protein resides in the chloroplast. The enzyme catalyses L-glutamyl-tRNA(Gln) + L-glutamine + ATP + H2O = L-glutaminyl-tRNA(Gln) + L-glutamate + ADP + phosphate + H(+). Functionally, allows the formation of correctly charged Gln-tRNA(Gln) through the transamidation of misacylated Glu-tRNA(Gln) in chloroplasts and mitochondria. The reaction takes place in the presence of glutamine and ATP through an activated gamma-phospho-Glu-tRNA(Gln). The chain is Glutamyl-tRNA(Gln) amidotransferase subunit B-2, chloroplastic/mitochondrial from Micromonas commoda (strain RCC299 / NOUM17 / CCMP2709) (Picoplanktonic green alga).